The chain runs to 60 residues: Large ribosomal subunit protein bL32B (60 aa).

Basic residues predominate over residues 1 to 19; that stretch reads MAVPKRKMSRANTRHRRSQ. The disordered stretch occupies residues 1 to 20; sequence MAVPKRKMSRANTRHRRSQW.

It belongs to the bacterial ribosomal protein bL32 family.

This Saccharopolyspora erythraea (strain ATCC 11635 / DSM 40517 / JCM 4748 / NBRC 13426 / NCIMB 8594 / NRRL 2338) protein is Large ribosomal subunit protein bL32B.